We begin with the raw amino-acid sequence, 180 residues long: UPF0227 protein YcfP (180 aa).

The protein belongs to the UPF0227 family.

In Escherichia coli O7:K1 (strain IAI39 / ExPEC), this protein is UPF0227 protein YcfP.